The chain runs to 499 residues: Xylulose kinase (499 aa).

81 to 82 (MH) serves as a coordination point for substrate. The Proton acceptor role is filled by aspartate 239.

Belongs to the FGGY kinase family.

The enzyme catalyses D-xylulose + ATP = D-xylulose 5-phosphate + ADP + H(+). Functionally, catalyzes the phosphorylation of D-xylulose to D-xylulose 5-phosphate. This is Xylulose kinase from Bacillus subtilis (strain 168).